The following is a 539-amino-acid chain: Chaperonin GroEL (539 aa).

ATP-binding positions include 29–32, 86–90, G414, and D493; these read TIGP and DGTTT.

It belongs to the chaperonin (HSP60) family. As to quaternary structure, forms a cylinder of 14 subunits composed of two heptameric rings stacked back-to-back. Interacts with the co-chaperonin GroES.

The protein resides in the cytoplasm. It catalyses the reaction ATP + H2O + a folded polypeptide = ADP + phosphate + an unfolded polypeptide.. Its function is as follows. Together with its co-chaperonin GroES, plays an essential role in assisting protein folding. The GroEL-GroES system forms a nano-cage that allows encapsulation of the non-native substrate proteins and provides a physical environment optimized to promote and accelerate protein folding. This is Chaperonin GroEL from Staphylococcus aureus.